The following is a 67-amino-acid chain: Beta-defensin 9 (67 aa).

An N-terminal signal peptide occupies residues 1–24 (MRTLCSLLLICCLLFSYTTPAANS). 3 disulfide bridges follow: Cys-34-Cys-62, Cys-41-Cys-55, and Cys-45-Cys-63.

It belongs to the beta-defensin family. As to expression, weakly expressed in adult and neonatal brain.

Its subcellular location is the secreted. Its function is as follows. Has antibacterial activity. The polypeptide is Beta-defensin 9 (Defb9) (Mus musculus (Mouse)).